A 426-amino-acid polypeptide reads, in one-letter code: Phosphomethylpyrimidine synthase (426 aa).

Substrate-binding positions include Asn-65, Met-94, Tyr-123, His-162, 184–186 (SRG), 225–228 (DGMR), and Glu-264. His-268 contributes to the Zn(2+) binding site. A substrate-binding site is contributed by Tyr-291. His-332 serves as a coordination point for Zn(2+). Residues Cys-408, Cys-411, and Cys-415 each contribute to the [4Fe-4S] cluster site.

It belongs to the ThiC family. It depends on [4Fe-4S] cluster as a cofactor.

The catalysed reaction is 5-amino-1-(5-phospho-beta-D-ribosyl)imidazole + S-adenosyl-L-methionine = 4-amino-2-methyl-5-(phosphooxymethyl)pyrimidine + CO + 5'-deoxyadenosine + formate + L-methionine + 3 H(+). It participates in cofactor biosynthesis; thiamine diphosphate biosynthesis. In terms of biological role, catalyzes the synthesis of the hydroxymethylpyrimidine phosphate (HMP-P) moiety of thiamine from aminoimidazole ribotide (AIR) in a radical S-adenosyl-L-methionine (SAM)-dependent reaction. This chain is Phosphomethylpyrimidine synthase, found in Methanococcus maripaludis (strain DSM 14266 / JCM 13030 / NBRC 101832 / S2 / LL).